The sequence spans 465 residues: Chaperone protein dnaJ C76, chloroplastic (465 aa).

The transit peptide at 1–38 directs the protein to the chloroplast; the sequence is MTPAIFSPTTLPPSTATWPCSTSQKLITVRSPLKFKCR. Residues 50–113 form the J domain; the sequence is DLYDLLGIDR…ISRQAYDKEQ (64 aa). Residues 346–385 form a disordered region; it reads AALPSSGNNNGSKASSNPQVTRKTFPSEEKPTSRRENRRQ. Residues 350 to 362 are compositionally biased toward low complexity; that stretch reads SSGNNNGSKASSN. Residues 370–384 are compositionally biased toward basic and acidic residues; it reads FPSEEKPTSRRENRR.

This sequence belongs to the DnaJ family. In terms of tissue distribution, expressed in roots, exclusively in the stele.

The protein resides in the plastid. It localises to the chloroplast. Its function is as follows. May function together with HSC70 chaperone to assist protein folding and prevent protein aggregation during salt stress in the chloroplast. Involved in root development. Required for the position-dependent cell fate determination during root hair development. This Arabidopsis thaliana (Mouse-ear cress) protein is Chaperone protein dnaJ C76, chloroplastic.